The primary structure comprises 357 residues: Membrane-bound lytic murein transglycosylase C (357 aa).

Residues 1–15 (MKKYLLLALLPFLYA) form the signal peptide. Cysteine 16 carries N-palmitoyl cysteine lipidation. Residue cysteine 16 is the site of S-diacylglycerol cysteine attachment.

This sequence belongs to the transglycosylase Slt family.

Its subcellular location is the cell outer membrane. The catalysed reaction is Exolytic cleavage of the (1-&gt;4)-beta-glycosidic linkage between N-acetylmuramic acid (MurNAc) and N-acetylglucosamine (GlcNAc) residues in peptidoglycan, from either the reducing or the non-reducing ends of the peptidoglycan chains, with concomitant formation of a 1,6-anhydrobond in the MurNAc residue.. Its function is as follows. Murein-degrading enzyme. May play a role in recycling of muropeptides during cell elongation and/or cell division. This chain is Membrane-bound lytic murein transglycosylase C, found in Haemophilus influenzae (strain ATCC 51907 / DSM 11121 / KW20 / Rd).